A 174-amino-acid chain; its full sequence is Shikimate kinase 2 (174 aa).

12 to 17 (GCGKTT) is an ATP binding site. Mg(2+) is bound by residues threonine 16 and aspartate 32. Aspartate 34, arginine 58, and glycine 79 together coordinate substrate. The segment at 112–126 (QAAPEEDLRPTLTGK) is LID domain. ATP is bound at residue arginine 120. Arginine 139 is a substrate binding site.

The protein belongs to the shikimate kinase family. AroL subfamily. In terms of assembly, monomer. Mg(2+) serves as cofactor.

The protein resides in the cytoplasm. It catalyses the reaction shikimate + ATP = 3-phosphoshikimate + ADP + H(+). The protein operates within metabolic intermediate biosynthesis; chorismate biosynthesis; chorismate from D-erythrose 4-phosphate and phosphoenolpyruvate: step 5/7. Functionally, catalyzes the specific phosphorylation of the 3-hydroxyl group of shikimic acid using ATP as a cosubstrate. This chain is Shikimate kinase 2, found in Escherichia coli O7:K1 (strain IAI39 / ExPEC).